Reading from the N-terminus, the 180-residue chain is 3-phenylpropionate/cinnamic acid dioxygenase subunit beta (180 aa).

It belongs to the bacterial ring-hydroxylating dioxygenase beta subunit family. As to quaternary structure, this dioxygenase system consists of four proteins: the two subunits of the hydroxylase component (HcaE and HcaF), a ferredoxin (HcaC) and a ferredoxin reductase (HcaD).

The enzyme catalyses 3-phenylpropanoate + NADH + O2 + H(+) = 3-(cis-5,6-dihydroxycyclohexa-1,3-dien-1-yl)propanoate + NAD(+). The catalysed reaction is (E)-cinnamate + NADH + O2 + H(+) = (2E)-3-(cis-5,6-dihydroxycyclohexa-1,3-dien-1-yl)prop-2-enoate + NAD(+). It participates in aromatic compound metabolism; 3-phenylpropanoate degradation. In terms of biological role, part of the multicomponent 3-phenylpropionate dioxygenase. Converts 3-phenylpropionic acid (PP) and cinnamic acid (CI) into 3-phenylpropionate-dihydrodiol (PP-dihydrodiol) and cinnamic acid-dihydrodiol (CI-dihydrodiol), respectively. This chain is 3-phenylpropionate/cinnamic acid dioxygenase subunit beta, found in Photorhabdus laumondii subsp. laumondii (strain DSM 15139 / CIP 105565 / TT01) (Photorhabdus luminescens subsp. laumondii).